Consider the following 46-residue polypeptide: Iota-conotoxin-like M11.1 (46 aa).

Cystine bridges form between Cys5/Cys19, Cys12/Cys22, Cys18/Cys27, and Cys21/Cys38. D-methionine is present on Met44. A propeptide (removed by a carboxypeptidase) is located at residue Arg46.

The protein belongs to the conotoxin I1 superfamily. Expressed by the venom duct.

The protein resides in the secreted. In terms of biological role, iota-conotoxins bind to voltage-gated sodium channels (Nav) and act as agonists by shifting the voltage-dependence of activation to more hyperpolarized levels. Produces general excitatory symptoms. This is Iota-conotoxin-like M11.1 from Conus magus (Magical cone).